Reading from the N-terminus, the 265-residue chain is Cell division protein FtsQ (265 aa).

The span at 1–13 (MAGATTAKGGARR) shows a compositional bias: low complexity. The tract at residues 1–25 (MAGATTAKGGARRTPPPGPPPPALK) is disordered. The Cytoplasmic segment spans residues 1 to 35 (MAGATTAKGGARRTPPPGPPPPALKARRRLRLPRR). A compositionally biased stretch (pro residues) spans 14–23 (TPPPGPPPPA). Residues 36 to 58 (RTLLVTGVATALLGSGVTWLLYG) form a helical membrane-spanning segment. The Extracellular portion of the chain corresponds to 59–265 (SSWLRVEQVA…APTAPAVTHS (207 aa)). Residues 62 to 131 (LRVEQVAVSG…DTIAVRVTER (70 aa)) form the POTRA domain.

It belongs to the FtsQ/DivIB family. FtsQ subfamily.

Its subcellular location is the cell membrane. In terms of biological role, essential cell division protein. The protein is Cell division protein FtsQ of Streptomyces bingchenggensis (strain BCW-1).